Here is a 572-residue protein sequence, read N- to C-terminus: Far upstream element-binding protein 3 (572 aa).

The residue at position 2 (Ala2) is an N-acetylalanine. Residues Lys15 and Lys57 each participate in a glycyl lysine isopeptide (Lys-Gly) (interchain with G-Cter in SUMO2) cross-link. At Thr76 the chain carries Phosphothreonine. 4 consecutive KH domains span residues 77–141 (VITE…KRLL), 162–228 (STIQ…REMV), 253–317 (GGSI…AHII), and 354–421 (VQEI…RQLI). Ser296 carries the phosphoserine modification. The disordered stretch occupies residues 426–521 (GGTNLGAPGA…SQPNYSKAWE (96 aa)). Low complexity predominate over residues 496 to 514 (QQPTQQVPSQQSQPQSSQP). A phosphoserine mark is found at Ser539 and Ser569.

In terms of tissue distribution, detected in a number of cell lines.

It localises to the nucleus. May interact with single-stranded DNA from the far-upstream element (FUSE). May activate gene expression. In Homo sapiens (Human), this protein is Far upstream element-binding protein 3 (FUBP3).